Here is a 521-residue protein sequence, read N- to C-terminus: Organic cation/carnitine transporter 6 (521 aa).

Topologically, residues 1 to 37 (MADPISEPLLSHLTDDSGVNEKTRLEALTFDKIVEQS) are cytoplasmic. The helical transmembrane segment at 38–58 (LSDFGFWQFFQISLVGLALLF) threads the bilayer. Residues 59–123 (DAQQIFITVY…GLECSSSLLR (65 aa)) lie on the Extracellular side of the membrane. Residue N79 is glycosylated (N-linked (GlcNAc...) asparagine). The helical transmembrane segment at 124 to 144 (GMPSSAFYIGAIVGGFFLALI) threads the bilayer. The Cytoplasmic segment spans residues 145–154 (PDDSLGRKKL). The chain crosses the membrane as a helical span at residues 155 to 177 (VLFSTFAMSITSISVIFSTNVWI). Over 178 to 182 (YTFLK) the chain is Extracellular. A helical transmembrane segment spans residues 183-200 (FIIGFSRSQTWSYALVLI). Residue 200–207 (ISERVSTR) participates in ATP binding. At 201-213 (SERVSTRWRPRAT) the chain is on the cytoplasmic side. The chain crosses the membrane as a helical span at residues 214–234 (MIPFTLFVLGFMSLSGIAFLA). At 235–241 (QDSSWRY) the chain is on the extracellular side. The chain crosses the membrane as a helical span at residues 242–262 (LYLYTSVPAVFYCIFLYLFAL). Over 263-326 (ESPRWLHMQG…FFFRKWAFRR (64 aa)) the chain is Cytoplasmic. The chain crosses the membrane as a helical span at residues 327-347 (ILVVMIIMFGLGISYYGVPLA). The Extracellular segment spans residues 348–356 (ARDIDVNIY). A helical transmembrane segment spans residues 357–377 (LSETLNALVELPTFVITPILL). Topologically, residues 378-385 (ERFNRRSS) are cytoplasmic. Residues 386–406 (VLVNTLLGGASGVLCFVLSIL) traverse the membrane as a helical segment. Residues 407–412 (GKTEIA) lie on the Extracellular side of the membrane. Residues 413-433 (FAFELGTFFCARIGFNLMAVF) form a helical membrane-spanning segment. Over 434 to 447 (MVEMFPTCVRSSAT) the chain is Cytoplasmic. The helical transmembrane segment at 448 to 468 (MMFRQALVVGGACCPLIASIG) threads the bilayer. The Extracellular segment spans residues 469 to 473 (RYIPS). Residues 474–494 (VSFAIFGIAMSGLGMFVLILP) form a helical membrane-spanning segment. Topologically, residues 495-521 (ETKGLSLCDSMEEQEKRDQAVNTSHVC) are cytoplasmic.

Belongs to the major facilitator (TC 2.A.1) superfamily. Organic cation transporter (TC 2.A.1.19) family. Expressed in roots and stems. In the stem of secondary inflorescences, localized to the phloem. Also present in flowers, specifically in the stamen, in the filaments and the connective, and restricted to major veins in leaves.

The protein resides in the vacuole membrane. Its function is as follows. High affinity carnitine transporter involved in the active cellular uptake of carnitine. Also transports organic cations. This is Organic cation/carnitine transporter 6 (OCT6) from Arabidopsis thaliana (Mouse-ear cress).